The chain runs to 124 residues: Large ribosomal subunit protein bL12 (124 aa).

The protein belongs to the bacterial ribosomal protein bL12 family. In terms of assembly, homodimer. Part of the ribosomal stalk of the 50S ribosomal subunit. Forms a multimeric L10(L12)X complex, where L10 forms an elongated spine to which 2 to 4 L12 dimers bind in a sequential fashion. Binds GTP-bound translation factors.

In terms of biological role, forms part of the ribosomal stalk which helps the ribosome interact with GTP-bound translation factors. Is thus essential for accurate translation. In Campylobacter fetus subsp. fetus (strain 82-40), this protein is Large ribosomal subunit protein bL12.